A 272-amino-acid chain; its full sequence is Shikimate dehydrogenase (NADP(+)) (272 aa).

Shikimate is bound by residues threonine 20–serine 22 and threonine 67. The active-site Proton acceptor is the lysine 71. Residue glutamate 83 coordinates NADP(+). The shikimate site is built by asparagine 92 and aspartate 107. NADP(+) contacts are provided by residues glycine 129–alanine 133, asparagine 153–lysine 158, and leucine 216. Shikimate is bound at residue tyrosine 218. Residue glycine 239 participates in NADP(+) binding.

Belongs to the shikimate dehydrogenase family. As to quaternary structure, homodimer.

It carries out the reaction shikimate + NADP(+) = 3-dehydroshikimate + NADPH + H(+). It participates in metabolic intermediate biosynthesis; chorismate biosynthesis; chorismate from D-erythrose 4-phosphate and phosphoenolpyruvate: step 4/7. In terms of biological role, involved in the biosynthesis of the chorismate, which leads to the biosynthesis of aromatic amino acids. Catalyzes the reversible NADPH linked reduction of 3-dehydroshikimate (DHSA) to yield shikimate (SA). The sequence is that of Shikimate dehydrogenase (NADP(+)) from Maridesulfovibrio salexigens (strain ATCC 14822 / DSM 2638 / NCIMB 8403 / VKM B-1763) (Desulfovibrio salexigens).